A 576-amino-acid chain; its full sequence is Rop guanine nucleotide exchange factor 13 (576 aa).

A PRONE domain is found at 119–485 (KSCYFAYVTE…QLTQNPELAM (367 aa)). Over residues 557-570 (KTTYLESLGTTRSP) the composition is skewed to polar residues. The interval 557–576 (KTTYLESLGTTRSPTAGRYS) is disordered.

As to quaternary structure, interacts with PRK6. Specifically expressed in mature flowers.

Functionally, guanine-nucleotide exchange factor (GEF) that acts as an activator of Rop (Rho of plants) GTPases by promoting the exchange of GDP for GTP. The polypeptide is Rop guanine nucleotide exchange factor 13 (Arabidopsis thaliana (Mouse-ear cress)).